A 336-amino-acid polypeptide reads, in one-letter code: Glucokinase (336 aa).

12-17 contacts ATP; it reads ADIGGT.

This sequence belongs to the bacterial glucokinase family.

It is found in the cytoplasm. The enzyme catalyses D-glucose + ATP = D-glucose 6-phosphate + ADP + H(+). In Helicobacter pylori (strain P12), this protein is Glucokinase.